The primary structure comprises 398 residues: Phosphoglycerate kinase (398 aa).

Substrate contacts are provided by residues 21–23 (DFN), Arg-36, 59–62 (HLGR), Arg-119, and Arg-157. ATP contacts are provided by residues Lys-208, Gly-296, Glu-327, and 354 to 357 (GGDS).

It belongs to the phosphoglycerate kinase family. In terms of assembly, monomer.

The protein resides in the cytoplasm. The enzyme catalyses (2R)-3-phosphoglycerate + ATP = (2R)-3-phospho-glyceroyl phosphate + ADP. Its pathway is carbohydrate degradation; glycolysis; pyruvate from D-glyceraldehyde 3-phosphate: step 2/5. This Streptococcus pneumoniae (strain Taiwan19F-14) protein is Phosphoglycerate kinase.